Reading from the N-terminus, the 511-residue chain is Cytochrome P450 monooxygenase roqR (511 aa).

Residues 1 to 23 form the signal peptide; it reads MSGYVLLTVQLAAVLLLVTLWRA. N-linked (GlcNAc...) asparagine glycosylation is found at Asn364, Asn373, and Asn383. Cys455 provides a ligand contact to heme.

The protein belongs to the cytochrome P450 family. It depends on heme as a cofactor.

It participates in alkaloid biosynthesis. Functionally, cytochrome P450 monooxygenase; part of the gene cluster that mediates the biosynthesis of the mycotoxins roquefortine C and meleagrin. The first stage is catalyzed by the dipeptide synthase roqA which condenses histidine and tryptophan to produce histidyltryptophanyldiketopiperazine (HTD). HTD is then converted to roquefortine C through two possible pathways. In the first pathway, prenyltransferase roqD transforms HTD to the intermediate roquefortine D, which is in turn converted to roquefortine C by the cytochrome P450 monooxygenase roqR. In the second pathway, HTD is first converted to the intermediate dehydrohistidyltryptophanyldi-ketopiperazine (DHTD) by roqR which is then prenylated by roqD to form roquefortine C. Roquefortine C can be further transformed to meleagrin via three more reactions including oxydation to glandicolin A by roqM, which is further reduced to glandicoline B by roqO. Finally, glandicoline B is converted to meleagrin by the glandicoline B O-methyltransferase roqN. More studies identified further branching and additional metabolites produced by the roquefortine/meleagrin cluster, including roquefortine F, roquefortine L, roquefortine M, roquefortine N and neoxaline. The polypeptide is Cytochrome P450 monooxygenase roqR (Penicillium rubens (strain ATCC 28089 / DSM 1075 / NRRL 1951 / Wisconsin 54-1255) (Penicillium chrysogenum)).